Reading from the N-terminus, the 430-residue chain is Resistance to inhibitors of cholinesterase protein 19 (430 aa).

The AH domain occupies 56–260; that stretch reads ASDNELDTCL…TSRAFETLAE (205 aa). The disordered stretch occupies residues 279 to 342; the sequence is GTKPERERKS…SPLIEDVDDE (64 aa). The span at 281–294 shows a compositional bias: basic and acidic residues; it reads KPERERKSEKEESA.

In terms of assembly, interacts with the GTPase activator protein tbc-8; the interaction is direct and may be required for the activation of rab-2 and dense vesicle maturation in cholinergic motoneurons. Interacts with rund-1. Expressed in all neurons. Highly expressed in m2 pharyngeal neurons and some pharyngeal interneurons. Also expressed in the excretory canal and the gland cells located just below the nerve ring in the head.

It localises to the cytoplasm. Its subcellular location is the cytoplasmic vesicle membrane. In terms of biological role, may be involved in neurotransmitter secretion. In association with the GTPase activator protein tbc-8 activates rab-2 during dense core vesicle maturation in cholinergic motoneurons. This Caenorhabditis elegans protein is Resistance to inhibitors of cholinesterase protein 19.